Here is a 204-residue protein sequence, read N- to C-terminus: VAEKAKDERELLEKTSELIAGMGDKIGEHLGDKYKAIAKDIADNIKNFQGKTIRSFDDAMASLNKITANPAMKINKADRDALVNAWKHVDAQDMANKLGNLSKAFKVADVVMKVEKVREKSIEGYETGNWGPLMLEVESWVLSGIASSVALGIFSATLGAYALSLGVPAIAVGIAGILLAAVVGALIDDKFADALNNEIIRPAH.

Transmembrane regions (helical) follow at residues 139-161 and 165-187; these read SWVL…LGAY and LGVP…GALI.

This sequence belongs to the channel forming colicin family.

It localises to the cell membrane. Functionally, this colicin is a channel-forming colicin. This class of transmembrane toxins depolarize the cytoplasmic membrane, leading to dissipation of cellular energy. In terms of biological role, colicins are polypeptide toxins produced by and active against E.coli and closely related bacteria. This Escherichia coli protein is Colicin-A (caa).